We begin with the raw amino-acid sequence, 788 residues long: Serine/threonine-protein kinase MARK2 (788 aa).

The interval methionine 1 to glutamate 46 is disordered. The segment covering lysine 27 to aspartate 45 has biased composition (polar residues). The residue at position 40 (serine 40) is a Phosphoserine. The 252-residue stretch at tyrosine 53–methionine 304 folds into the Protein kinase domain. A Phosphothreonine; by autocatalysis modification is found at threonine 58. ATP is bound by residues isoleucine 59–valine 67 and lysine 82. Phosphoserine; by CaMK1 is present on residues serine 91, serine 92, and serine 93. Residue aspartate 175 is the Proton acceptor of the active site. At threonine 208 the chain carries Phosphothreonine; by LKB1 and TAOK1. Phosphoserine; by GSK3-beta is present on serine 212. At serine 274 the chain carries Phosphoserine; by autocatalysis. Threonine 275 carries the post-translational modification Phosphothreonine; by autocatalysis. Threonine 294 carries the post-translational modification Phosphothreonine; by CaMK1. In terms of domain architecture, UBA spans tyrosine 323–glycine 362. Residues isoleucine 373–glycine 632 form a disordered region. Lysine 376 and serine 409 each carry phosphoserine. The span at proline 418–alanine 432 shows a compositional bias: polar residues. A compositionally biased stretch (basic and acidic residues) spans glutamate 433–arginine 445. Phosphoserine is present on serine 456. Residue threonine 467 is modified to Phosphothreonine. Residues threonine 467–serine 486 are compositionally biased toward polar residues. Residues serine 486 and serine 493 each carry the phosphoserine modification. The segment covering glycine 495–aspartate 504 has biased composition (polar residues). Residues serine 511 to alanine 525 show a composition bias toward low complexity. Phosphoserine occurs at positions 569, 571, and 592. Threonine 596 carries the phosphothreonine; by PKC/PRKCZ modification. A phosphoserine mark is found at serine 619 and serine 722. The 50-residue stretch at threonine 739 to leucine 788 folds into the KA1 domain.

It belongs to the protein kinase superfamily. CAMK Ser/Thr protein kinase family. SNF1 subfamily. As to quaternary structure, homodimer. Interacts with PAK5; leading to inhibit the protein kinase activity. Interacts with MAPT/TAU. Interacts with MTCL1 isoform 1; the interaction is direct and increases MARK2 microtubule-binding ability. Interacts (when phosphorylated at Thr-596) with YWHAZ. Interacts with YWHAB, YWHAG and YWHAQ. In terms of assembly, (Microbial infection) In case of infection, interacts with H.pylori CagA, leading to inhibit kinase activity and junctional and polarity defects. The cofactor is Mg(2+). In terms of processing, autophosphorylated. Phosphorylated at Thr-208 by STK11/LKB1 in complex with STE20-related adapter-alpha (STRADA) pseudo kinase and CAB39. Phosphorylation at Thr-208 by TAOK1 activates the kinase activity, leading to phosphorylation and detachment of MAPT/TAU from microtubules. Phosphorylation at Ser-212 by GSK3-beta (GSK3B) inhibits the kinase activity. Phosphorylation by CaMK1 promotes activity and is required to promote neurite outgrowth. Phosphorylation at Thr-596 by PRKCZ/aPKC in polarized epithelial cells inhibits the kinase activity and promotes binding to 14-3-3 protein YWHAZ, leading to relocation from cell membrane to cytoplasm. As to expression, high levels of expression in heart, brain, skeletal muscle and pancreas, lower levels observed in lung, liver and kidney.

Its subcellular location is the cell membrane. The protein localises to the cytoplasm. The protein resides in the lateral cell membrane. It is found in the cytoskeleton. It localises to the cell projection. Its subcellular location is the dendrite. It catalyses the reaction L-seryl-[protein] + ATP = O-phospho-L-seryl-[protein] + ADP + H(+). The enzyme catalyses L-threonyl-[protein] + ATP = O-phospho-L-threonyl-[protein] + ADP + H(+). The catalysed reaction is L-seryl-[tau protein] + ATP = O-phospho-L-seryl-[tau protein] + ADP + H(+). It carries out the reaction L-threonyl-[tau protein] + ATP = O-phospho-L-threonyl-[tau protein] + ADP + H(+). Its activity is regulated as follows. Inhibited by PAK5; inhibition is independent of the kinase activity of PAK5. Activated by phosphorylation on Thr-208. Inhibited by phosphorylation at Ser-212 and Thr-596. Inhibited by hymenialdisine. Specifically inhibited by the H.pylori CagA peptide FPLKRHDKVDDLSK that mimics host substrates and binds to the kinase substrate-binding site. Functionally, serine/threonine-protein kinase. Involved in cell polarity and microtubule dynamics regulation. Phosphorylates CRTC2/TORC2, DCX, HDAC7, KIF13B, MAP2, MAP4 and RAB11FIP2. Phosphorylates the microtubule-associated protein MAPT/TAU. Plays a key role in cell polarity by phosphorylating the microtubule-associated proteins MAP2, MAP4 and MAPT/TAU at KXGS motifs, causing detachment from microtubules, and their disassembly. Regulates epithelial cell polarity by phosphorylating RAB11FIP2. Involved in the regulation of neuronal migration through its dual activities in regulating cellular polarity and microtubule dynamics, possibly by phosphorylating and regulating DCX. Regulates axogenesis by phosphorylating KIF13B, promoting interaction between KIF13B and 14-3-3 and inhibiting microtubule-dependent accumulation of KIF13B. Also required for neurite outgrowth and establishment of neuronal polarity. Regulates localization and activity of some histone deacetylases by mediating phosphorylation of HDAC7, promoting subsequent interaction between HDAC7 and 14-3-3 and export from the nucleus. Also acts as a positive regulator of the Wnt signaling pathway, probably by mediating phosphorylation of dishevelled proteins (DVL1, DVL2 and/or DVL3). Modulates the developmental decision to build a columnar versus a hepatic epithelial cell apparently by promoting a switch from a direct to a transcytotic mode of apical protein delivery. Essential for the asymmetric development of membrane domains of polarized epithelial cells. This chain is Serine/threonine-protein kinase MARK2, found in Homo sapiens (Human).